A 404-amino-acid polypeptide reads, in one-letter code: Mitochondrial intermembrane space import and assembly protein 40 (404 aa).

Residues 1 to 34 (MVSAVSRQLVNRQLNRVLLRNARIAPFARATRFY) constitute a mitochondrion transit peptide. Topologically, residues 35–50 (SSKYAQESENAKRHKM) are mitochondrial matrix. The chain crosses the membrane as a helical; Signal-anchor for type II membrane protein span at residues 51-71 (GLLIAGVAVAGAIVFVTPPQW). The Mitochondrial intermembrane portion of the chain corresponds to 72 to 404 (KKYFRAAKKV…PDEDTASKKD (333 aa)). A disordered region spans residues 84 to 287 (VAESKEDPVS…SAYNPDTGEI (204 aa)). Residues 101–113 (ESVQESTEEPQQS) show a composition bias toward low complexity. Polar residues predominate over residues 124–135 (EQAQDESASSGD). 3 stretches are compositionally biased toward basic and acidic residues: residues 136–156 (SEAKKAHDEFADQNEASEKES), 226–237 (EEDKTPKAEELK), and 246–276 (EEPKKEDDSSKTIHSLNSEKDMEAVEEEVKQ). 3 cysteine pairs are disulfide-bonded: C291–C293, C302–C335, and C312–C325. A CHCH domain is found at 299–343 (HGPCGEEFKAAFSCFVYSEAEPKGIDCVEKFQHMQDCFRRYPEHY). Short sequence motifs (cx9C motif) lie at residues 302-312 (CGEEFKAAFSC) and 325-335 (CVEKFQHMQDC). Residues 346-404 (QLADPADDENVDHEKNLSEGKDTGVDSTPPKDEAYLKTEKEKKIEENASPDEDTASKKD) form a disordered region. Positions 357 to 391 (DHEKNLSEGKDTGVDSTPPKDEAYLKTEKEKKIEE) are enriched in basic and acidic residues.

As to quaternary structure, monomer. Requires Cu(2+) as cofactor. The cofactor is Zn(2+).

It is found in the mitochondrion inner membrane. Required for the import and folding of small cysteine-containing proteins (small Tim) in the mitochondrial intermembrane space (IMS). Forms a redox cycle with ERV1 that involves a disulfide relay system. Precursor proteins to be imported into the IMS are translocated in their reduced form into the mitochondria. The oxidized form of MIA40 forms a transient intermolecular disulfide bridge with the reduced precursor protein, resulting in oxidation of the precursor protein that now contains an intramolecular disulfide bond and is able to undergo folding in the IMS. In Candida glabrata (strain ATCC 2001 / BCRC 20586 / JCM 3761 / NBRC 0622 / NRRL Y-65 / CBS 138) (Yeast), this protein is Mitochondrial intermembrane space import and assembly protein 40 (MIA40).